The primary structure comprises 441 residues: Ribosomal protein uS12 methylthiotransferase RimO (441 aa).

An MTTase N-terminal domain is found at 8–118 (PKIGFVSLGC…VLQHVHHYVP (111 aa)). Cys-17, Cys-53, Cys-82, Cys-150, Cys-154, and Cys-157 together coordinate [4Fe-4S] cluster. Residues 136–373 (LTPRHYAYLK…MQLQQQISAE (238 aa)) enclose the Radical SAM core domain. In terms of domain architecture, TRAM spans 376 to 441 (QEKVGREILV…DEYDLWGSRV (66 aa)).

The protein belongs to the methylthiotransferase family. RimO subfamily. The cofactor is [4Fe-4S] cluster.

Its subcellular location is the cytoplasm. The enzyme catalyses L-aspartate(89)-[ribosomal protein uS12]-hydrogen + (sulfur carrier)-SH + AH2 + 2 S-adenosyl-L-methionine = 3-methylsulfanyl-L-aspartate(89)-[ribosomal protein uS12]-hydrogen + (sulfur carrier)-H + 5'-deoxyadenosine + L-methionine + A + S-adenosyl-L-homocysteine + 2 H(+). Functionally, catalyzes the methylthiolation of an aspartic acid residue of ribosomal protein uS12. This chain is Ribosomal protein uS12 methylthiotransferase RimO, found in Salmonella agona (strain SL483).